The primary structure comprises 313 residues: Potassium channel subfamily K member 6 (313 aa).

Topologically, residues 1-4 (MRRG) are cytoplasmic. Residues 5 to 25 (ALLASALAAYAGYLALGALLV) traverse the membrane as a helical segment. N79 and N85 each carry an N-linked (GlcNAc...) asparagine glycan. An intramembrane region (pore-forming) is located at residues 90 to 115 (AWDFASALFFASTLVTTVGYGYTTPL). Positions 106, 107, 108, and 109 each coordinate K(+). The interval 106–111 (TVGYGY) is selectivity filter 1. A helical transmembrane segment spans residues 121-141 (AFSIVFALLGVPITMLLLTAS). Over 142 to 172 (AQRLSLLLTHAPLSWLSLHWGWPPQRAARWH) the chain is Cytoplasmic. Residues 173-193 (LVALLMVIVAIFFLVPAAVFA) traverse the membrane as a helical segment. The segment at residues 199–223 (WSFLDAFYFCFISLSTIGLGDYVPG) is an intramembrane region (pore-forming). Residues T214, I215, and G216 each coordinate K(+). Residues 214–219 (TIGLGD) form a selectivity filter 2 region. A helical transmembrane segment spans residues 236–256 (VLVTAYLFLGLVAMVLVLQTF). The Cytoplasmic portion of the chain corresponds to 257-313 (RRVSDLHGLTELILLPDPDPASLSQDEDDQVAVLDARTDLHQHLSAASHADYASIPR). 2 consecutive short sequence motifs (lysosomal targeting signal) follow at residues 282 to 290 (DEDDQVAVL) and 308 to 312 (YASIP).

Belongs to the two pore domain potassium channel (TC 1.A.1.8) family. In terms of assembly, homodimer; disulfide-linked. N-glycosylation is necessary for targeting to lysosomes.

The protein resides in the late endosome membrane. The protein localises to the lysosome membrane. The catalysed reaction is K(+)(in) = K(+)(out). K(+) channel that conducts outward rectifying currents at the membranes of the endolysosomal system. Active in lysosomes where it regulates lysosome numbers and size. In macrophages, enables K(+) efflux coupled to ATP-induced NLRP3 inflammasome activation upon bacterial infection. Cooperates with ATP-gated P2RX7 to activate NLRP3 inflammasome, with P2RX7 conducting Ca(2+) and Na(+) influx that sets the membrane potential for K(+) efflux. The polypeptide is Potassium channel subfamily K member 6 (Mus musculus (Mouse)).